We begin with the raw amino-acid sequence, 364 residues long: Fructose-bisphosphate aldolase B (364 aa).

An N-acetylalanine modification is found at Ala2. N6-succinyllysine is present on Lys13. Ser36 bears the Phosphoserine mark. A Phosphothreonine modification is found at Thr39. Beta-D-fructose 1,6-bisphosphate is bound at residue Arg43. Ser89 bears the Phosphoserine mark. A Phosphothreonine modification is found at Thr119. Lys121 is modified (N6-succinyllysine). At Ser132 the chain carries Phosphoserine. The active-site Proton acceptor is the Glu188. The residue at position 206 (Ser206) is a Phosphoserine. Lys230 serves as the catalytic Schiff-base intermediate with dihydroxyacetone-P. Phosphoserine occurs at positions 272, 276, 299, and 301. 272 to 274 (SGG) is a beta-D-fructose 1,6-bisphosphate binding site. Arg304 contacts beta-D-fructose 1,6-bisphosphate. The residue at position 309 (Ser309) is a Phosphoserine. Lys317 carries the post-translational modification N6-succinyllysine.

This sequence belongs to the class I fructose-bisphosphate aldolase family. In terms of assembly, homotetramer. Interacts with BBS1, BBS2, BBS4 and BBS7. Forms a ternary complex with G6PD and TP53; this interaction is direct.

The protein resides in the cytoplasm. The protein localises to the cytosol. Its subcellular location is the cytoskeleton. It is found in the microtubule organizing center. It localises to the centrosome. The protein resides in the centriolar satellite. The enzyme catalyses beta-D-fructose 1,6-bisphosphate = D-glyceraldehyde 3-phosphate + dihydroxyacetone phosphate. It catalyses the reaction beta-D-fructose 1-phosphate = D-glyceraldehyde + dihydroxyacetone phosphate. Its pathway is carbohydrate degradation; glycolysis; D-glyceraldehyde 3-phosphate and glycerone phosphate from D-glucose: step 4/4. It functions in the pathway carbohydrate biosynthesis; gluconeogenesis. It participates in carbohydrate metabolism; fructose metabolism. Catalyzes the aldol cleavage of fructose 1,6-biphosphate to form two triosephosphates dihydroxyacetone phosphate and D-glyceraldehyde 3-phosphate in glycolysis as well as the reverse stereospecific aldol addition reaction in gluconeogenesis. In fructolysis, metabolizes fructose 1-phosphate derived from the phosphorylation of dietary fructose by fructokinase into dihydroxyacetone phosphate and D-glyceraldehyde. Acts as an adapter independently of its enzymatic activity, exerts a tumor suppressor role by stabilizing the ternary complex with G6PD and TP53 to inhibit G6PD activity and keep oxidative pentose phosphate metabolism in check. This chain is Fructose-bisphosphate aldolase B, found in Mus musculus (Mouse).